The following is a 447-amino-acid chain: Voltage-gated purine nucleotide uniporter SLC17A9 (447 aa).

A disordered region spans residues Met-1–Asp-26. 11 helical membrane passes run Ile-40–Val-60, Gly-74–Leu-94, Val-103–His-123, Leu-129–Ala-149, Thr-169–Leu-189, Cys-192–Val-212, Val-252–Trp-272, Trp-287–Ile-307, Val-327–Leu-347, Gly-380–Leu-400, and Cys-413–Gly-433.

This sequence belongs to the major facilitator superfamily. Sodium/anion cotransporter family. In brain, specifically expressed in the medulla and is associated with chromaffin granules (at protein level). Predominantly expressed in adrenal gland, brain and thyroid.

It is found in the cytoplasmic vesicle. It localises to the secretory vesicle. The protein localises to the chromaffin granule membrane. The protein resides in the secretory vesicle membrane. Its subcellular location is the lysosome membrane. The enzyme catalyses ATP(in) = ATP(out). It carries out the reaction ADP(in) = ADP(out). The catalysed reaction is GTP(in) = GTP(out). Its activity is regulated as follows. Activity is chloride-dependent. In terms of biological role, voltage-gated ATP nucleotide uniporter that can also transport the purine nucleotides ADP and GTP. Uses the membrane potential as the driving force to control ATP accumulation in lysosomes and secretory vesicles. By controlling ATP storage in lysosomes, regulates ATP-dependent proteins of these organelles. Also indirectly regulates the exocytosis of ATP through its import into lysosomes in astrocytes and secretory vesicles such as adrenal chromaffin granules, mucin granules and synaptic vesicles. The protein is Voltage-gated purine nucleotide uniporter SLC17A9 of Mus musculus (Mouse).